A 167-amino-acid chain; its full sequence is Putative pre-16S rRNA nuclease (167 aa).

It belongs to the YqgF nuclease family.

Its subcellular location is the cytoplasm. Functionally, could be a nuclease involved in processing of the 5'-end of pre-16S rRNA. The polypeptide is Putative pre-16S rRNA nuclease (Streptomyces coelicolor (strain ATCC BAA-471 / A3(2) / M145)).